The primary structure comprises 443 residues: Nuclear hormone receptor family member nhr-60 (443 aa).

Residues 1 to 20 are compositionally biased toward low complexity; that stretch reads MIQSSSSISQDSLDLPSILS. The disordered stretch occupies residues 1 to 40; the sequence is MIQSSSSISQDSLDLPSILSTFSADEPEDEPSPTAVKSTK. A DNA-binding region (nuclear receptor) is located at residues 44–121; it reads PTECLICGNS…VGMNPLAMEV (78 aa). 2 consecutive NR C4-type zinc fingers follow at residues 47-67 and 83-104; these read CLIC…CNGC and CKAK…CRAC. An NR LBD domain is found at 196-439; sequence NEFSGLEYLL…KDLVMRVIED (244 aa). The segment at 225–249 is disordered; sequence LRRDQLGPPRLPKPPSPGKPRDSQH. A compositionally biased stretch (pro residues) spans 233–242; it reads PRLPKPPSPG.

Belongs to the nuclear hormone receptor family.

It is found in the nucleus. In terms of biological role, orphan nuclear receptor (Potential). Required for embryonic and larval morphogenesis and probably for seam cell positioning and migration. This chain is Nuclear hormone receptor family member nhr-60, found in Caenorhabditis elegans.